The chain runs to 1036 residues: Protein CLEC16A (1036 aa).

In terms of domain architecture, FPL spans isoleucine 51–tyrosine 198. Disordered stretches follow at residues serine 375–lysine 416, glycine 437–asparagine 458, histidine 876–leucine 967, and serine 1008–histidine 1036. Over residues histidine 381–asparagine 392 the composition is skewed to basic residues. 3 stretches are compositionally biased toward low complexity: residues serine 877–glycine 891, serine 898–threonine 923, and asparagine 943–serine 954.

It belongs to the CLEC16A/gop-1 family. In terms of assembly, interacts with RNF41/NRDP1. Ubiquitously expressed. Expressed in pancreatic islets.

The protein resides in the endosome membrane. It localises to the lysosome membrane. Regulator of mitophagy through the upstream regulation of the RNF41/NRDP1-PRKN pathway. Mitophagy is a selective form of autophagy necessary for mitochondrial quality control. The RNF41/NRDP1-PRKN pathway regulates autophagosome-lysosome fusion during late mitophagy. May protect RNF41/NRDP1 from proteasomal degradation, RNF41/NRDP1 which regulates proteasomal degradation of PRKN. Plays a key role in beta cells functions by regulating mitophagy/autophagy and mitochondrial health. In Mus musculus (Mouse), this protein is Protein CLEC16A.